Reading from the N-terminus, the 141-residue chain is Large ribosomal subunit protein uL13 (141 aa).

Belongs to the universal ribosomal protein uL13 family. Part of the 50S ribosomal subunit.

Functionally, this protein is one of the early assembly proteins of the 50S ribosomal subunit, although it is not seen to bind rRNA by itself. It is important during the early stages of 50S assembly. The polypeptide is Large ribosomal subunit protein uL13 (Helicobacter pylori (strain P12)).